Consider the following 157-residue polypeptide: NudC domain-containing protein 2 (157 aa).

Serine 2 carries the post-translational modification N-acetylserine. Positions 14 to 104 (CGTPWGQWYQ…DAANCWTSLL (91 aa)) constitute a CS domain. Positions 134–157 (FDFSGAEISGNYTKGGPDFSNLEK) are disordered. A Phosphoserine modification is found at serine 142. Position 145 is a phosphotyrosine (tyrosine 145).

As to quaternary structure, interacts with LIS1.

Its subcellular location is the chromosome. The protein localises to the centromere. It localises to the kinetochore. It is found in the cytoplasm. The protein resides in the cytoskeleton. Its subcellular location is the microtubule organizing center. The protein localises to the centrosome. It localises to the spindle pole. May regulate the LIS1/dynein pathway by stabilizing LIS1 with Hsp90 chaperone. The polypeptide is NudC domain-containing protein 2 (NUDCD2) (Homo sapiens (Human)).